A 174-amino-acid polypeptide reads, in one-letter code: UPF0340 protein SAB1998c (174 aa).

Belongs to the UPF0340 family.

In Staphylococcus aureus (strain bovine RF122 / ET3-1), this protein is UPF0340 protein SAB1998c.